A 545-amino-acid chain; its full sequence is MKSLALALLVGGAIAAGPQQQVLQAPVDNPDVAEPPLQTIADTFDHLRGQATNLWNDVIDKVPNIMDTITHTPPPKKFNRRPDSEWNHIVRGAEIQAVWVEGDDGEKHRKVGGKLEAYDLRVKAVDPKSLGVDTVRQYSGYLDDNENDKHLFYWFFESRNDPENDPVVLWLNGGPGCSSLTGLFLELGPSSITEDLKVNYNPYSWNANASVIFLDQPVNVGYSYSGGSVSDTNAAGKDVYALLTLFFEQFPEYAKQDFHIAGESYAGHYIPVFASEIMAHKERNINLKSILIGNGLTDPLTQYPLYRPMACGEGGYPAVLDQASCQSMDNALPRCLSMIEACYSSESAWTCVPASIYCNNAIIGPYQRTGRNPYDVRTDCEGGNLCYTQLGDISKYLNQAEVMKALGAEVSTYDSCNMDINRNFLFRGDWMKPFHRLVPGLIAEMPVLLYAGDADFICNWLGNKAWAEALEYPGHAKFAAAEMKNLTIVDNKSKGKVIGQVKSAGNFTFMRLYGGGHMVPLDQPEASLEFMNRWLKGEWSAKSSS.

An N-terminal signal peptide occupies residues 1-17 (MKSLALALLVGGAIAAG). The propeptide occupies 18–123 (PQQQVLQAPV…KLEAYDLRVK (106 aa)). Cystine bridges form between Cys177-Cys416, Cys311-Cys325, Cys335-Cys358, Cys342-Cys351, and Cys380-Cys386. A glycan (N-linked (GlcNAc...) asparagine) is linked at Asn208. Ser264 is an active-site residue. The active site involves Asp455. N-linked (GlcNAc...) asparagine glycans are attached at residues Asn485, Asn491, and Asn506. Residue His517 is part of the active site.

Belongs to the peptidase S10 family.

The protein resides in the vacuole. The catalysed reaction is Release of a C-terminal amino acid with broad specificity.. In terms of biological role, vacuolar carboxypeptidase involved in degradation of small peptides. Digests preferentially peptides containing an aliphatic or hydrophobic residue in P1' position, as well as methionine, leucine or phenylalanine in P1 position of ester substrate. In Ajellomyces dermatitidis (strain ER-3 / ATCC MYA-2586) (Blastomyces dermatitidis), this protein is Carboxypeptidase Y homolog A (CPYA).